A 759-amino-acid polypeptide reads, in one-letter code: Phosphoribosylformylglycinamidine synthase subunit PurL (759 aa).

His61 is a catalytic residue. Tyr64 and Lys105 together coordinate ATP. Residue Glu107 coordinates Mg(2+). Residues 108-111 and Arg130 contribute to the substrate site; that span reads SHNH. His109 (proton acceptor) is an active-site residue. Asp131 contributes to the Mg(2+) binding site. Substrate is bound at residue Gln260. Asp288 contributes to the Mg(2+) binding site. 332–334 serves as a coordination point for substrate; that stretch reads ESQ. 2 residues coordinate ATP: Asp520 and Gly557. Asn558 is a Mg(2+) binding site. Ser560 provides a ligand contact to substrate.

Belongs to the FGAMS family. In terms of assembly, monomer. Part of the FGAM synthase complex composed of 1 PurL, 1 PurQ and 2 PurS subunits.

The protein resides in the cytoplasm. The enzyme catalyses N(2)-formyl-N(1)-(5-phospho-beta-D-ribosyl)glycinamide + L-glutamine + ATP + H2O = 2-formamido-N(1)-(5-O-phospho-beta-D-ribosyl)acetamidine + L-glutamate + ADP + phosphate + H(+). It participates in purine metabolism; IMP biosynthesis via de novo pathway; 5-amino-1-(5-phospho-D-ribosyl)imidazole from N(2)-formyl-N(1)-(5-phospho-D-ribosyl)glycinamide: step 1/2. Functionally, part of the phosphoribosylformylglycinamidine synthase complex involved in the purines biosynthetic pathway. Catalyzes the ATP-dependent conversion of formylglycinamide ribonucleotide (FGAR) and glutamine to yield formylglycinamidine ribonucleotide (FGAM) and glutamate. The FGAM synthase complex is composed of three subunits. PurQ produces an ammonia molecule by converting glutamine to glutamate. PurL transfers the ammonia molecule to FGAR to form FGAM in an ATP-dependent manner. PurS interacts with PurQ and PurL and is thought to assist in the transfer of the ammonia molecule from PurQ to PurL. This chain is Phosphoribosylformylglycinamidine synthase subunit PurL, found in Thermoplasma volcanium (strain ATCC 51530 / DSM 4299 / JCM 9571 / NBRC 15438 / GSS1).